The chain runs to 288 residues: Diaminopimelate epimerase (288 aa).

2 residues coordinate substrate: Asn14 and Asn67. The active-site Proton donor is Cys76. Substrate contacts are provided by residues 77–78 (GN), Asn166, Asn199, and 217–218 (ER). The active-site Proton acceptor is the Cys226. A substrate-binding site is contributed by 227–228 (GT).

The protein belongs to the diaminopimelate epimerase family. As to quaternary structure, homodimer.

Its subcellular location is the cytoplasm. It catalyses the reaction (2S,6S)-2,6-diaminopimelate = meso-2,6-diaminopimelate. It functions in the pathway amino-acid biosynthesis; L-lysine biosynthesis via DAP pathway; DL-2,6-diaminopimelate from LL-2,6-diaminopimelate: step 1/1. Its function is as follows. Catalyzes the stereoinversion of LL-2,6-diaminopimelate (L,L-DAP) to meso-diaminopimelate (meso-DAP), a precursor of L-lysine and an essential component of the bacterial peptidoglycan. This is Diaminopimelate epimerase from Bacillus cereus (strain B4264).